The sequence spans 507 residues: UDP-N-acetylhexosamine pyrophosphorylase-like protein 1 (507 aa).

The disordered stretch occupies residues 56–91; it reads ACARPHGPPPDLAARLRPLPPERVGRASRSDPETRR. Residues 78–91 are compositionally biased toward basic and acidic residues; it reads RVGRASRSDPETRR. A Substrate binding motif is present at residues 111–114; sequence LAGG. UTP-binding positions include 111-114, Lys125, Gln199, and Gly225; that span reads LAGG. Asn226 contacts substrate. A UTP-binding site is contributed by Asp256. The Substrate binding motif lies at 306 to 307; that stretch reads EY. A UTP-binding site is contributed by Lys380. A substrate-binding site is contributed by Lys410.

It belongs to the UDPGP type 1 family.

This is UDP-N-acetylhexosamine pyrophosphorylase-like protein 1 (UAP1L1) from Homo sapiens (Human).